Consider the following 283-residue polypeptide: Pantothenate synthetase (283 aa).

31 to 38 (MGALHDGH) contributes to the ATP binding site. The Proton donor role is filled by His-38. Gln-62 lines the (R)-pantoate pocket. A beta-alanine-binding site is contributed by Gln-62. Position 148–151 (148–151 (GKKD)) interacts with ATP. A (R)-pantoate-binding site is contributed by Gln-154. ATP is bound by residues Val-177 and 185–188 (KSSR).

The protein belongs to the pantothenate synthetase family. Homodimer.

The protein localises to the cytoplasm. It catalyses the reaction (R)-pantoate + beta-alanine + ATP = (R)-pantothenate + AMP + diphosphate + H(+). Its pathway is cofactor biosynthesis; (R)-pantothenate biosynthesis; (R)-pantothenate from (R)-pantoate and beta-alanine: step 1/1. In terms of biological role, catalyzes the condensation of pantoate with beta-alanine in an ATP-dependent reaction via a pantoyl-adenylate intermediate. This is Pantothenate synthetase from Staphylococcus aureus (strain MRSA252).